The sequence spans 46 residues: Replication-associated protein (46 aa).

Seems to play a role in virus replication. This is Replication-associated protein from Solanum tuberosum (Potato).